Reading from the N-terminus, the 769-residue chain is Serine/threonine-protein kinase PLK4 (769 aa).

Residues 14-267 (YEVQHLLGKG…LEAVLCHPFM (254 aa)) form the Protein kinase domain. ATP contacts are provided by residues 20 to 28 (LGKGGFATV) and Lys43. Residue Asp138 is the Proton acceptor of the active site. The region spanning 381-498 (EDRISVPPLN…ARFVGLVKSK (118 aa)) is the Cryptic POLO box 1 (CPB1) domain. In terms of domain architecture, Cryptic POLO box 2 (CPB2) spans 499-602 (TPKVTYFSTL…GRRPITDVQP (104 aa)). The 80-residue stretch at 660 to 739 (PIKRINVPDI…IPNIQLKLKT (80 aa)) folds into the POLO box domain.

This sequence belongs to the protein kinase superfamily. Ser/Thr protein kinase family. CDC5/Polo subfamily. As to quaternary structure, homodimer. In terms of processing, ubiquitinated by the SCF(Slimb) ubiquitin ligase complex; leading to its degradation by the proteasome during interphase and regulating centriole number and ensuring the block to centriole reduplication.

It is found in the cytoplasm. The protein resides in the cytoskeleton. Its subcellular location is the microtubule organizing center. The protein localises to the centrosome. It localises to the centriole. The enzyme catalyses L-seryl-[protein] + ATP = O-phospho-L-seryl-[protein] + ADP + H(+). It catalyses the reaction L-threonyl-[protein] + ATP = O-phospho-L-threonyl-[protein] + ADP + H(+). Functionally, serine/threonine-protein kinase that plays a central role in centriole duplication. Able to trigger procentriole formation on the surface of the mother centriole cylinder, using mother centriole as a platform, leading to the recruitment of centriole biogenesis proteins such as sas-6. When overexpressed, it is able to induce centrosome amplification through the simultaneous generation of multiple procentrioles adjoining each parental centriole during S phase. Centrosome amplification following overexpression can initiate tumorigenesis, highlighting the importance of centrosome regulation in cancers. This is Serine/threonine-protein kinase PLK4 (SAK) from Drosophila sechellia (Fruit fly).